Here is a 182-residue protein sequence, read N- to C-terminus: MAQKERGERDERDGEFVDRLVHINRVAKVVKGGRRFGFAALVVVGDQKGRVGFGHGKAREVPEAVRKATEAAKRGMIYVPLRSGRTLHHDLEGRHGAGRVLLRSASAGTGIIAGGPMRAIFETLGMQDVVAKSLGSSNPYNMVRATFDALKHQMHPRDIAVQRGIKYSILQARRQHLVDAEG.

The S5 DRBM domain maps to 16–79 (FVDRLVHINR…EAAKRGMIYV (64 aa)).

This sequence belongs to the universal ribosomal protein uS5 family. Part of the 30S ribosomal subunit. Contacts proteins S4 and S8.

In terms of biological role, with S4 and S12 plays an important role in translational accuracy. Functionally, located at the back of the 30S subunit body where it stabilizes the conformation of the head with respect to the body. The polypeptide is Small ribosomal subunit protein uS5 (Bartonella quintana (strain Toulouse) (Rochalimaea quintana)).